The following is a 321-amino-acid chain: D-alanine--D-alanine ligase (321 aa).

The region spanning 121 to 315 (RSWFLTNNIN…FVNLIEEILK (195 aa)) is the ATP-grasp domain. 148-199 (IKRPYVIKPFTQGSSIGVEVIFEEDDFNFANYDFPYGDEVIIEKYIKGRELQ) is a binding site for ATP. Glu-268, Glu-282, and Asn-284 together coordinate Mg(2+).

It belongs to the D-alanine--D-alanine ligase family. Mg(2+) is required as a cofactor. Requires Mn(2+) as cofactor.

It is found in the cytoplasm. The catalysed reaction is 2 D-alanine + ATP = D-alanyl-D-alanine + ADP + phosphate + H(+). It functions in the pathway cell wall biogenesis; peptidoglycan biosynthesis. In terms of biological role, cell wall formation. The protein is D-alanine--D-alanine ligase of Rickettsia bellii (strain RML369-C).